The primary structure comprises 645 residues: COP9 signalosome complex subunit 10 (645 aa).

A compositionally biased stretch (acidic residues) spans 1–45; the sequence is MSDEDNNYDDFMLSDDEGMESIEMEEETDDEDKQNIEINEDNSQD. The interval 1–63 is disordered; it reads MSDEDNNYDD…HKQHEQGTFE (63 aa). The span at 46–63 shows a compositional bias: basic and acidic residues; the sequence is DQDRGAARHKQHEQGTFE. The PCI domain maps to 348–543; the sequence is DLSFALMRYY…DLVYFGDENK (196 aa).

As to quaternary structure, component of a COP9 signalosome-like (CSN) complex, composed of at least RRI1/CSN5, CSN9, RRI2/CSN10, PCI8/CSN11, CSN12 and CSI1. In the complex, it probably interacts directly with CSN12.

It is found in the cytoplasm. Its subcellular location is the nucleus. Functionally, component of the COP9 signalosome (CSN) complex that acts as an regulator of the ubiquitin (Ubl) conjugation pathway by mediating the deneddylation of the cullin subunit of SCF-type E3 ubiquitin-protein ligase complexes. The CSN complex is involved in the regulation of the mating pheromone response. The polypeptide is COP9 signalosome complex subunit 10 (RRI2) (Saccharomyces cerevisiae (strain ATCC 204508 / S288c) (Baker's yeast)).